Reading from the N-terminus, the 369-residue chain is Biglycan (369 aa).

Residues 1 to 16 form the signal peptide; it reads MWPLWPLAALLALSQA. Positions 17 to 37 are excised as a propeptide; sequence LPFEQKAFWDFTLDDGLPMLN. O-linked (Xyl...) (glycosaminoglycan) serine glycans are attached at residues Ser42 and Ser48. 2 disulfide bridges follow: Cys64-Cys70 and Cys68-Cys77. LRR repeat units lie at residues 83-103, 104-127, 128-151, 152-172, 173-196, 197-221, 222-242, 243-266, 267-290, 291-313, 314-343, and 344-369; these read KAVPKEISPDTTLLDLQNNDI, SELRKDDFKGLQHLYALVLVNNKI, SKIHEKAFSPLRKLQKLYISKNHL, VEIPPNLPSSLVELRIHDNRI, RKVPKGVFSGLRNMNCIEMGGNPL, ENSGFEPGAFDGLKLNYLRISEAKL, TGIPKDLPETLNELHLDHNKI, QAIELEDLLRYSKLYRLGLGHNQI, RMIENGSLSFLPTLRELHLDNNKL, SRVPAGLPDLKLLQVVYLHTNNI, TKVGVNDFCPVGFGVKRAYYNGISLFNNPV, and PYWEVQPATFRCVTDRLAIQFGNYKK. O-linked (Xyl...) (glycosaminoglycan) serine glycans are attached at residues Ser181 and Ser199. Asn271 and Asn312 each carry an N-linked (GlcNAc...) asparagine glycan. Cys322 and Cys355 are oxidised to a cystine.

It belongs to the small leucine-rich proteoglycan (SLRP) family. SLRP class I subfamily. As to quaternary structure, homodimer. Forms a ternary complex with MFAP2 and ELN. In terms of processing, the two attached glycosaminoglycan chains can be either chondroitin sulfate or dermatan sulfate. Found in several connective tissues, especially in articular cartilages.

It localises to the secreted. The protein resides in the extracellular space. The protein localises to the extracellular matrix. Functionally, may be involved in collagen fiber assembly. The chain is Biglycan (BGN) from Bos taurus (Bovine).